Reading from the N-terminus, the 299-residue chain is Acetylglutamate kinase (299 aa).

Substrate-binding positions include 70-71, Arg-92, and Asn-197; that span reads GG.

This sequence belongs to the acetylglutamate kinase family. ArgB subfamily.

Its subcellular location is the cytoplasm. The enzyme catalyses N-acetyl-L-glutamate + ATP = N-acetyl-L-glutamyl 5-phosphate + ADP. It functions in the pathway amino-acid biosynthesis; L-arginine biosynthesis; N(2)-acetyl-L-ornithine from L-glutamate: step 2/4. Functionally, catalyzes the ATP-dependent phosphorylation of N-acetyl-L-glutamate. The chain is Acetylglutamate kinase from Acidiphilium cryptum (strain JF-5).